A 93-amino-acid chain; its full sequence is Phosphoribosyl-ATP pyrophosphatase (93 aa).

The protein belongs to the PRA-PH family.

It is found in the cytoplasm. The catalysed reaction is 1-(5-phospho-beta-D-ribosyl)-ATP + H2O = 1-(5-phospho-beta-D-ribosyl)-5'-AMP + diphosphate + H(+). Its pathway is amino-acid biosynthesis; L-histidine biosynthesis; L-histidine from 5-phospho-alpha-D-ribose 1-diphosphate: step 2/9. This chain is Phosphoribosyl-ATP pyrophosphatase, found in Mycolicibacterium smegmatis (strain ATCC 700084 / mc(2)155) (Mycobacterium smegmatis).